Reading from the N-terminus, the 635-residue chain is Biosynthetic arginine decarboxylase (635 aa).

Position 100 is an N6-(pyridoxal phosphate)lysine (Lys-100). Substrate is bound at residue 282 to 292 (VDIGGGLGVDY).

Belongs to the Orn/Lys/Arg decarboxylase class-II family. SpeA subfamily. Mg(2+) is required as a cofactor. Pyridoxal 5'-phosphate serves as cofactor.

It carries out the reaction L-arginine + H(+) = agmatine + CO2. The protein operates within amine and polyamine biosynthesis; agmatine biosynthesis; agmatine from L-arginine: step 1/1. Functionally, catalyzes the biosynthesis of agmatine from arginine. In Geobacter sulfurreducens (strain ATCC 51573 / DSM 12127 / PCA), this protein is Biosynthetic arginine decarboxylase.